Here is a 221-residue protein sequence, read N- to C-terminus: Endonuclease V (221 aa).

Mg(2+) is bound by residues Asp-43 and Asp-109.

The protein belongs to the endonuclease V family. It depends on Mg(2+) as a cofactor.

The protein localises to the cytoplasm. The catalysed reaction is Endonucleolytic cleavage at apurinic or apyrimidinic sites to products with a 5'-phosphate.. DNA repair enzyme involved in the repair of deaminated bases. Selectively cleaves double-stranded DNA at the second phosphodiester bond 3' to a deoxyinosine leaving behind the intact lesion on the nicked DNA. This Petrotoga mobilis (strain DSM 10674 / SJ95) protein is Endonuclease V.